A 154-amino-acid chain; its full sequence is Cold shock domain-containing protein C2 (154 aa).

Disordered stretches follow at residues 1-22 and 36-62; these read MTSE…SPVW and ERGG…SATA. S19 bears the Phosphoserine mark. In terms of domain architecture, CSD spans 69–136; sequence VFKGVCKQFS…KFQAVEVVLT (68 aa).

Brain-specific. Expression restricted to the pyramidal neurons of the cerebral cortex and in the Purkinje cells of the cerebellum.

It is found in the nucleus. It localises to the cytoplasm. RNA-binding factor which binds specifically to the very 3'-UTR ends of both histone H1 and H3.3 mRNAs, encompassing the polyadenylation signal. Might play a central role in the negative regulation of histone variant synthesis in the developing brain. In Rattus norvegicus (Rat), this protein is Cold shock domain-containing protein C2 (Csdc2).